A 116-amino-acid polypeptide reads, in one-letter code: Protein Rev (116 aa).

2 positions are modified to phosphoserine; by host CK2: Ser-5 and Ser-8. The segment at 18–26 (LIKFLYQSN) is homomultimerization. Residues 23-48 (YQSNPPPKPEGTRQARRNRRRRWRER) form a disordered region. Residues 34 to 50 (TRQARRNRRRRWRERQR) carry the Nuclear localization signal and RNA-binding (RRE) motif. The segment covering 36-47 (QARRNRRRRWRE) has biased composition (basic residues). The Nuclear export signal and binding to XPO1 motif lies at 73–84 (LQLPPLERLTLD). Phosphoserine; by host occurs at positions 92 and 99. The tract at residues 92-116 (SGTQGVGSPQILVESPTVLESGTKE) is disordered.

Belongs to the HIV-1 REV protein family. As to quaternary structure, homomultimer; when bound to the RRE. Multimeric assembly is essential for activity and may involve XPO1. Binds to human KPNB1, XPO1, TNPO1, RANBP5 and IPO7. Interacts with the viral Integrase. Interacts with human KHDRBS1. Interacts with human NAP1; this interaction decreases Rev multimerization and stimulates its activity. Interacts with human DEAD-box helicases DDX3 and DDX24; these interactions may serve for viral RNA export to the cytoplasm and packaging, respectively. Interacts with human PSIP1; this interaction may inhibit HIV-1 DNA integration by promoting dissociation of the Integrase-LEDGF/p75 complex. Post-translationally, asymmetrically arginine dimethylated at one site by host PRMT6. Methylation impairs the RNA-binding activity and export of viral RNA from the nucleus to the cytoplasm. In terms of processing, phosphorylated by protein kinase CK2. Presence of, and maybe binding to the N-terminus of the regulatory beta subunit of CK2 is necessary for CK2-mediated Rev's phosphorylation.

Its subcellular location is the host nucleus. It is found in the host nucleolus. It localises to the host cytoplasm. Its function is as follows. Escorts unspliced or incompletely spliced viral pre-mRNAs (late transcripts) out of the nucleus of infected cells. These pre-mRNAs carry a recognition sequence called Rev responsive element (RRE) located in the env gene, that is not present in fully spliced viral mRNAs (early transcripts). This function is essential since most viral proteins are translated from unspliced or partially spliced pre-mRNAs which cannot exit the nucleus by the pathway used by fully processed cellular mRNAs. Rev itself is translated from a fully spliced mRNA that readily exits the nucleus. Rev's nuclear localization signal (NLS) binds directly to KPNB1/Importin beta-1 without previous binding to KPNA1/Importin alpha-1. KPNB1 binds to the GDP bound form of RAN (Ran-GDP) and targets Rev to the nucleus. In the nucleus, the conversion from Ran-GDP to Ran-GTP dissociates Rev from KPNB1 and allows Rev's binding to the RRE in viral pre-mRNAs. Rev multimerization on the RRE via cooperative assembly exposes its nuclear export signal (NES) to the surface. Rev can then form a complex with XPO1/CRM1 and Ran-GTP, leading to nuclear export of the complex. Conversion from Ran-GTP to Ran-GDP mediates dissociation of the Rev/RRE/XPO1/RAN complex, so that Rev can return to the nucleus for a subsequent round of export. Beside KPNB1, also seems to interact with TNPO1/Transportin-1, RANBP5/IPO5 and IPO7/RANBP7 for nuclear import. The nucleoporin-like HRB/RIP is an essential cofactor that probably indirectly interacts with Rev to release HIV RNAs from the perinuclear region to the cytoplasm. The protein is Protein Rev of Human immunodeficiency virus type 1 group M subtype B (isolate SC) (HIV-1).